Consider the following 217-residue polypeptide: 7-cyano-7-deazaguanine synthase (217 aa).

Residue 10–20 (FSGGQDSTTCL) participates in ATP binding. Cys185, Cys194, Cys197, and Cys200 together coordinate Zn(2+).

It belongs to the QueC family. In terms of assembly, homodimer. Zn(2+) is required as a cofactor.

The catalysed reaction is 7-carboxy-7-deazaguanine + NH4(+) + ATP = 7-cyano-7-deazaguanine + ADP + phosphate + H2O + H(+). It participates in purine metabolism; 7-cyano-7-deazaguanine biosynthesis. Its function is as follows. Catalyzes the ATP-dependent conversion of 7-carboxy-7-deazaguanine (CDG) to 7-cyano-7-deazaguanine (preQ(0)). This chain is 7-cyano-7-deazaguanine synthase, found in Streptococcus mutans serotype c (strain ATCC 700610 / UA159).